The primary structure comprises 286 residues: Interferon-induced 35 kDa protein homolog (286 aa).

The leucine-zipper stretch occupies residues 5–26; the sequence is LQTVLYSLQEEQARLKMRLQEL. 2 NID domains span residues 81 to 170 and 183 to 266; these read ALVT…GDVE and FADE…GEVE.

It belongs to the NMI family. As to quaternary structure, homodimer. Also interacts with B-ATF. Interacts with TRIM21. Interacts (via NID domains) with NMI (via NID domains); the interaction is direct and is facilitated by TRIM21. Post-translationally, phosphorylated. Dephosphorylation correlates with the formation of a complex with NMI.

The protein resides in the cytoplasm. It is found in the nucleus. It localises to the secreted. Acts as a signaling pathway regulator involved in innate immune system response. In response to interferon IFN-alpha, associates in a complex with transcriptional regulator NMI to regulate immune response; the complex formation prevents proteasome-mediated degradation of IFI35 and correlates with IFI35 dephosphorylation. In complex with NMI, inhibits virus-triggered type I interferon/IFN-beta production. In complex with NMI, negatively regulates nuclear factor NF-kappa-B signaling by inhibiting the nuclear translocation, activation and transcription of the NF-kappa-B subunit p65/RELA, resulting in the inhibition of endothelial cell proliferation, migration and re-endothelialization of injured arteries. Beside its role as an intracellular signaling pathway regulator, also functions extracellularly as damage-associated molecular patterns (DAMPs) to promote inflammation when actively released by macrophage to the extracellular space during cell injury and pathogen invasion. Macrophage-secreted IFI35 activates NF-kappa-B signaling in adjacent macrophages through Toll-like receptor 4/TLR4 activation, thereby inducing NF-kappa-B translocation from the cytoplasm into the nucleus which promotes the release of pro-inflammatory cytokines. This chain is Interferon-induced 35 kDa protein homolog, found in Mus musculus (Mouse).